The primary structure comprises 569 residues: Proline--tRNA ligase (569 aa).

Belongs to the class-II aminoacyl-tRNA synthetase family. ProS type 1 subfamily. Homodimer.

Its subcellular location is the cytoplasm. It catalyses the reaction tRNA(Pro) + L-proline + ATP = L-prolyl-tRNA(Pro) + AMP + diphosphate. Its function is as follows. Catalyzes the attachment of proline to tRNA(Pro) in a two-step reaction: proline is first activated by ATP to form Pro-AMP and then transferred to the acceptor end of tRNA(Pro). As ProRS can inadvertently accommodate and process non-cognate amino acids such as alanine and cysteine, to avoid such errors it has two additional distinct editing activities against alanine. One activity is designated as 'pretransfer' editing and involves the tRNA(Pro)-independent hydrolysis of activated Ala-AMP. The other activity is designated 'posttransfer' editing and involves deacylation of mischarged Ala-tRNA(Pro). The misacylated Cys-tRNA(Pro) is not edited by ProRS. The sequence is that of Proline--tRNA ligase from Dehalococcoides mccartyi (strain CBDB1).